Reading from the N-terminus, the 178-residue chain is Mediator of RNA polymerase II transcription subunit 21 (178 aa).

The interval 36–91 (DDDDVNSYSNMAANAPLPQSQQQRQQQKKQQEPQQEIEQPQQQSNPESKSISPPKE) is disordered. A compositionally biased stretch (low complexity) spans 67–85 (EPQQEIEQPQQQSNPESKS). Residues 128–169 (NEQMNLINELSDKLQAIEEERIQKIKEKDNLLNLLESMIKEV) adopt a coiled-coil conformation.

Belongs to the Mediator complex subunit 21 family. Component of the Mediator complex.

The protein resides in the nucleus. Its function is as follows. Component of the Mediator complex, a coactivator involved in the regulated transcription of nearly all RNA polymerase II-dependent genes. Mediator functions as a bridge to convey information from gene-specific regulatory proteins to the basal RNA polymerase II transcription machinery. Mediator is recruited to promoters by direct interactions with regulatory proteins and serves as a scaffold for the assembly of a functional preinitiation complex with RNA polymerase II and the general transcription factors. The polypeptide is Mediator of RNA polymerase II transcription subunit 21 (SRB7) (Candida albicans (strain SC5314 / ATCC MYA-2876) (Yeast)).